The chain runs to 195 residues: Cytochrome c oxidase subunit 1 (195 aa).

The chain crosses the membrane as a helical span at residues 12 to 32 (MYWVLGFIFLFTLGGLTGIVL). Mg(2+)-binding residues include H42 and D43. Residue H50 participates in heme a3 binding. Fe(II)-heme a is bound at residue H52. The next 3 helical transmembrane spans lie at 59–79 (AVFA…GLVL), 88–108 (FIVM…LGLA), and 131–151 (GSLM…EAFL).

Belongs to the heme-copper respiratory oxidase family. As to quaternary structure, component of the cytochrome c oxidase (complex IV, CIV), a multisubunit enzyme composed of a catalytic core of 3 subunits and several supernumerary subunits. The complex exists as a monomer or a dimer and forms supercomplexes (SCs) in the inner mitochondrial membrane with ubiquinol-cytochrome c oxidoreductase (cytochrome b-c1 complex, complex III, CIII). The cofactor is heme. Cu cation is required as a cofactor.

The protein resides in the mitochondrion inner membrane. The catalysed reaction is 4 Fe(II)-[cytochrome c] + O2 + 8 H(+)(in) = 4 Fe(III)-[cytochrome c] + 2 H2O + 4 H(+)(out). The protein operates within energy metabolism; oxidative phosphorylation. Component of the cytochrome c oxidase, the last enzyme in the mitochondrial electron transport chain which drives oxidative phosphorylation. The respiratory chain contains 3 multisubunit complexes succinate dehydrogenase (complex II, CII), ubiquinol-cytochrome c oxidoreductase (cytochrome b-c1 complex, complex III, CIII) and cytochrome c oxidase (complex IV, CIV), that cooperate to transfer electrons derived from NADH and succinate to molecular oxygen, creating an electrochemical gradient over the inner membrane that drives transmembrane transport and the ATP synthase. Cytochrome c oxidase is the component of the respiratory chain that catalyzes the reduction of oxygen to water. Electrons originating from reduced cytochrome c in the intermembrane space (IMS) are transferred via the dinuclear copper A center (CU(A)) of subunit 2 and heme A of subunit 1 to the active site in subunit 1, a binuclear center (BNC) formed by heme A3 and copper B (CU(B)). The BNC reduces molecular oxygen to 2 water molecules using 4 electrons from cytochrome c in the IMS and 4 protons from the mitochondrial matrix. This is Cytochrome c oxidase subunit 1 (COI) from Albinaria turrita (Door snail).